A 138-amino-acid polypeptide reads, in one-letter code: Putative pre-16S rRNA nuclease (138 aa).

This sequence belongs to the YqgF nuclease family.

The protein localises to the cytoplasm. Its function is as follows. Could be a nuclease involved in processing of the 5'-end of pre-16S rRNA. The protein is Putative pre-16S rRNA nuclease of Carboxydothermus hydrogenoformans (strain ATCC BAA-161 / DSM 6008 / Z-2901).